The following is a 308-amino-acid chain: D-2-hydroxyacid dehydrogenase (308 aa).

Residues 145–146, 224–226, and Asp-250 contribute to the NAD(+) site; these read TL and VAR. Arg-226 is an active-site residue. Glu-255 is a catalytic residue. Catalysis depends on His-274, which acts as the Proton donor. Residue 274–277 coordinates NAD(+); the sequence is HVSA.

It belongs to the D-isomer specific 2-hydroxyacid dehydrogenase family. As to quaternary structure, homotetramer.

Its function is as follows. Catalyzes the stereospecific NAD(P)H-dependent reduction of 2-ketocarboxylic acids into the corresponding D-2-hydroxycarboxylic acids. Can use both NADPH or NADH as reductant, displaying a marked preference for NADPH over NADH. Shows a broad substrate specificity, although it displays a marked preference for the 2-ketocarboxylic acids having an unbranched chain of 4-5 carbon atoms. The sequence is that of D-2-hydroxyacid dehydrogenase (ddh) from Haloferax mediterranei (strain ATCC 33500 / DSM 1411 / JCM 8866 / NBRC 14739 / NCIMB 2177 / R-4) (Halobacterium mediterranei).